The chain runs to 559 residues: Actin-binding protein WASF1 (559 aa).

Disordered regions lie at residues 169–202 (TEDK…DRRR), 307–400 (RPQS…SPPV), and 412–492 (VHPL…STLP). Over residues 182–202 (KNLDRPHEPEKVPRAPHDRRR) the composition is skewed to basic and acidic residues. A compositionally biased stretch (pro residues) spans 322–332 (PTPPPPPPPLP). Over residues 333-346 (SALSTSSLRASMTS) the composition is skewed to low complexity. Arg-341 bears the Asymmetric dimethylarginine; alternate mark. At Arg-341 the chain carries Omega-N-methylarginine; alternate. Pro residues-rich tracts occupy residues 347 to 374 (TPPP…PPAP), 384 to 399 (PAPP…PSPP), 423 to 437 (LPPP…PPGI), and 458 to 477 (TPSP…PPSQ). Ser-489 carries the post-translational modification Phosphoserine. The WH2 domain maps to 497 to 514 (ARSVLLEAIRKGIQLRKV).

The protein belongs to the SCAR/WAVE family. Component of the WAVE1 complex composed of ABI2, CYFIP1 or CYFIP2, BRK1, NCKAP1 and WASF1/WAVE1. Within the complex, a heterodimer containing NCKAP1 and CYFIP1 interacts with a heterotrimer formed by WAVE1, ABI2 and BRK1. CYFIP2 binds to activated RAC1 which causes the complex to dissociate, releasing activated WASF1. The complex can also be activated by NCK1. Binds actin and the Arp2/3 complex. Interacts with BAIAP2. Interacts with SHANK3; the interaction mediates the association of SHANK3 with the WAVE1 complex. Interacts with ABI1 (via N-terminus). Interacts with SORBS2; this interaction greatly enhances phosphorylation by ABL1 and dephosphorylation by PTPN12 and might mediate partial to focal adhesion sites. As to expression, expressed in hippocampal neurons (at protein level).

It is found in the cytoplasm. It localises to the cytoskeleton. The protein localises to the synapse. Its subcellular location is the cell junction. The protein resides in the focal adhesion. In terms of biological role, downstream effector molecule involved in the transmission of signals from tyrosine kinase receptors and small GTPases to the actin cytoskeleton. Promotes formation of actin filaments. Part of the WAVE complex that regulates lamellipodia formation. The WAVE complex regulates actin filament reorganization via its interaction with the Arp2/3 complex. As component of the WAVE1 complex, required for BDNF-NTRK2 endocytic trafficking and signaling from early endosomes. Also involved in the regulation of mitochondrial dynamics. The chain is Actin-binding protein WASF1 (Wasf1) from Rattus norvegicus (Rat).